The following is a 271-amino-acid chain: Delta(3,5)-Delta(2,4)-dienoyl-CoA isomerase (271 aa).

Substrate is bound by residues 62-66 (SGGKF) and L120. E152 acts as the Proton donor/acceptor in catalysis. The Peroxisome targeting signal (PTS1) motif lies at 269–271 (HKL).

Belongs to the enoyl-CoA hydratase/isomerase family. In terms of assembly, interacts with ECI1.

The protein resides in the peroxisome. The catalysed reaction is a (3E,5Z)-dienoyl-CoA = a (2E,4E)-(5,6-saturated)-dienoyl-CoA. It functions in the pathway lipid metabolism; fatty acid beta-oxidation. Peroxisomal di-isomerase that is involved in fatty acid metabolism enzyme by converting 3,5-dienoyl-CoAs to the corresponding 2,4-dienoyl-CoAs. Required for ECI1 to be located to the peroxisome. This chain is Delta(3,5)-Delta(2,4)-dienoyl-CoA isomerase, found in Saccharomyces cerevisiae (strain ATCC 204508 / S288c) (Baker's yeast).